A 263-amino-acid polypeptide reads, in one-letter code: Protein STK_14130 (263 aa).

The protein belongs to the CinA family.

This chain is Protein STK_14130, found in Sulfurisphaera tokodaii (strain DSM 16993 / JCM 10545 / NBRC 100140 / 7) (Sulfolobus tokodaii).